The sequence spans 193 residues: ECF RNA polymerase sigma factor SigK (193 aa).

Residues 35–101 (LYDRTRSRVY…RRAVDRVRSE (67 aa)) are sigma-70 factor domain-2. The Polymerase core binding motif lies at 59-62 (ETTQ). The segment at 140-187 (MGSLSDLQREAIQLAYYEGLTYVQVSERLSANLATIKSRMRGGIRGLK) is sigma-70 factor domain-4. The H-T-H motif DNA-binding region spans 161–180 (YVQVSERLSANLATIKSRMR).

The protein belongs to the sigma-70 factor family. ECF subfamily. As to quaternary structure, interacts transiently with the RNA polymerase catalytic core formed by RpoA, RpoB, RpoC and RpoZ (2 alpha, 1 beta, 1 beta' and 1 omega subunit) to form the RNA polymerase holoenzyme that can initiate transcription. Interacts (via sigma-70 factor domain 4) with anti-sigma-K factor RskA.

Its function is as follows. Sigma factors are initiation factors that promote the attachment of RNA polymerase to specific initiation sites and are then released. Extracytoplasmic function (ECF) sigma factors are held in an inactive form by an anti-sigma factor until released by regulated intramembrane proteolysis. The polypeptide is ECF RNA polymerase sigma factor SigK (sigK) (Mycobacterium sp. (strain KMS)).